The sequence spans 366 residues: 5-hydroxytryptamine receptor 1F (366 aa).

The Extracellular segment spans residues 1-24 (MDFLNASDQNLTSEELLNRMPSKI). Asparagine 5 and asparagine 10 each carry an N-linked (GlcNAc...) asparagine glycan. The chain crosses the membrane as a helical span at residues 25-49 (LVSLTLSGLALMTTTINSLVIAAII). Over 50–59 (VTRKLHHPAN) the chain is Cytoplasmic. The helical transmembrane segment at 60–81 (YLICSLAVTDFLVAVLVMPFSI) threads the bilayer. Topologically, residues 82 to 96 (VYIVRESWIMGQVLC) are extracellular. Cysteine 96 and cysteine 172 are joined by a disulfide. The helical transmembrane segment at 97-119 (DIWLSVDIICCTCSILHLSAIAL) threads the bilayer. Residues aspartate 103 and cysteine 107 each coordinate serotonin. A DRY motif; important for ligand-induced conformation changes motif is present at residues 120 to 122 (DRY). Residues 120–139 (DRYRAITDAVEYARKRTPRH) lie on the Cytoplasmic side of the membrane. The chain crosses the membrane as a helical span at residues 140 to 159 (AGIMITIVWVISVFISMPPL). Topologically, residues 160–178 (FWRHQGTSRDDECVIKHDH) are extracellular. A helical transmembrane segment spans residues 179–202 (IVSTIYSTFGAFYIPLVLILILYY). The Cytoplasmic portion of the chain corresponds to 203-291 (KIYRAARTLY…KISGTRERKA (89 aa)). The helical transmembrane segment at 292-315 (ATTLGLILGAFVICWLPFFVKELV) threads the bilayer. Topologically, residues 316-327 (VNVCEKCKISEE) are extracellular. Residues 328 to 350 (MSNFLAWLGYLNSLINPLIYTIF) traverse the membrane as a helical segment. The short motif at 343–347 (NPLIY) is the NPxxY motif; important for ligand-induced conformation changes and signaling element. Topologically, residues 351-366 (NEDFKKAFQKLVRCRY) are cytoplasmic.

The protein belongs to the G-protein coupled receptor 1 family. In terms of tissue distribution, detected in hippocampus.

Its subcellular location is the cell membrane. Its function is as follows. G-protein coupled receptor for 5-hydroxytryptamine (serotonin). Also functions as a receptor for various alkaloids and psychoactive substances. Ligand binding causes a conformation change that triggers signaling via guanine nucleotide-binding proteins (G proteins) and modulates the activity of downstream effectors, such as adenylate cyclase. HTR1F is coupled to G(i)/G(o) G alpha proteins and mediates inhibitory neurotransmission by inhibiting adenylate cyclase activity. The polypeptide is 5-hydroxytryptamine receptor 1F (Htr1f) (Mus musculus (Mouse)).